The primary structure comprises 604 residues: Transcriptional repressor rco-1 (604 aa).

Disordered stretches follow at residues 87–110 (RGGA…PAIG) and 124–264 (GGQA…DRLP). Residues 144-163 (MPAPPGLQGPPPPPPPPSQQ) show a composition bias toward pro residues. Low complexity-rich tracts occupy residues 164-177 (PPFQ…QGPG) and 190-209 (PGPA…PATP). Residues 210-229 (QINTPIPYNGGPAQSPQVPT) are compositionally biased toward polar residues. WD repeat units follow at residues 295–324 (QHES…QIYD), 342–372 (TGDL…RVWD), 384–414 (GHEQ…RLWD), 425–455 (SIED…RVWD), 469–499 (GHKD…KMWE), 523–553 (GHRD…QFWD), and 565–600 (GHKN…RIWS).

Functionally, represses transcription by RNA polymerase II. May be involved at several stages of conidiation and other growth and development processes. Appears to regulate genes that are expressed in asexual and sexual spore pathways. The chain is Transcriptional repressor rco-1 (rco-1) from Neurospora crassa (strain ATCC 24698 / 74-OR23-1A / CBS 708.71 / DSM 1257 / FGSC 987).